Here is a 155-residue protein sequence, read N- to C-terminus: Cytochrome c-type biogenesis protein CcmE (155 aa).

Over 1–8 (MNPIRKKR) the chain is Cytoplasmic. The chain crosses the membrane as a helical; Signal-anchor for type II membrane protein span at residues 9 to 29 (LYWILALLCGVSIAMALALSA). The Periplasmic segment spans residues 30 to 155 (LQENINLFYT…PKRVKQESTR (126 aa)). Heme-binding residues include His-124 and Tyr-128.

This sequence belongs to the CcmE/CycJ family.

It is found in the cell inner membrane. In terms of biological role, heme chaperone required for the biogenesis of c-type cytochromes. Transiently binds heme delivered by CcmC and transfers the heme to apo-cytochromes in a process facilitated by CcmF and CcmH. This Janthinobacterium sp. (strain Marseille) (Minibacterium massiliensis) protein is Cytochrome c-type biogenesis protein CcmE.